A 636-amino-acid polypeptide reads, in one-letter code: Threonine--tRNA ligase (636 aa).

In terms of domain architecture, TGS spans 1 to 63; sequence MINITTSFPN…SKDGSVDPVT (63 aa). The segment at 244–535 is catalytic; it reads DHRKIAKDLG…LIEHYAGNIP (292 aa). 3 residues coordinate Zn(2+): Cys-335, His-386, and His-512.

It belongs to the class-II aminoacyl-tRNA synthetase family. In terms of assembly, homodimer. Requires Zn(2+) as cofactor.

Its subcellular location is the cytoplasm. The enzyme catalyses tRNA(Thr) + L-threonine + ATP = L-threonyl-tRNA(Thr) + AMP + diphosphate + H(+). Its function is as follows. Catalyzes the attachment of threonine to tRNA(Thr) in a two-step reaction: L-threonine is first activated by ATP to form Thr-AMP and then transferred to the acceptor end of tRNA(Thr). Also edits incorrectly charged L-seryl-tRNA(Thr). This chain is Threonine--tRNA ligase, found in Anaplasma marginale (strain St. Maries).